The primary structure comprises 286 residues: UDP-3-O-acyl-N-acetylglucosamine deacetylase (286 aa).

Residues His79, His237, and Asp241 each contribute to the Zn(2+) site. The active-site Proton donor is the His264.

This sequence belongs to the LpxC family. The cofactor is Zn(2+).

It carries out the reaction a UDP-3-O-[(3R)-3-hydroxyacyl]-N-acetyl-alpha-D-glucosamine + H2O = a UDP-3-O-[(3R)-3-hydroxyacyl]-alpha-D-glucosamine + acetate. The protein operates within glycolipid biosynthesis; lipid IV(A) biosynthesis; lipid IV(A) from (3R)-3-hydroxytetradecanoyl-[acyl-carrier-protein] and UDP-N-acetyl-alpha-D-glucosamine: step 2/6. Catalyzes the hydrolysis of UDP-3-O-myristoyl-N-acetylglucosamine to form UDP-3-O-myristoylglucosamine and acetate, the committed step in lipid A biosynthesis. This chain is UDP-3-O-acyl-N-acetylglucosamine deacetylase, found in Chlamydia trachomatis serovar A (strain ATCC VR-571B / DSM 19440 / HAR-13).